The following is a 469-amino-acid chain: tRNA modification GTPase MnmE (469 aa).

3 residues coordinate (6S)-5-formyl-5,6,7,8-tetrahydrofolate: Arg-26, Glu-88, and Arg-127. The TrmE-type G domain occupies 222–390 (GLKVAIVGRP…LEDAILHLVQ (169 aa)). Asn-232 lines the K(+) pocket. GTP is bound by residues 232–237 (NVGKSS), 251–257 (TDLPGTT), 276–279 (DTAG), and 344–347 (NKAD). Residue Ser-236 coordinates Mg(2+). 3 residues coordinate K(+): Thr-251, Leu-253, and Thr-256. Thr-257 provides a ligand contact to Mg(2+). Lys-469 is a binding site for (6S)-5-formyl-5,6,7,8-tetrahydrofolate.

The protein belongs to the TRAFAC class TrmE-Era-EngA-EngB-Septin-like GTPase superfamily. TrmE GTPase family. In terms of assembly, homodimer. Heterotetramer of two MnmE and two MnmG subunits. K(+) is required as a cofactor.

It is found in the cytoplasm. Functionally, exhibits a very high intrinsic GTPase hydrolysis rate. Involved in the addition of a carboxymethylaminomethyl (cmnm) group at the wobble position (U34) of certain tRNAs, forming tRNA-cmnm(5)s(2)U34. The sequence is that of tRNA modification GTPase MnmE from Synechococcus elongatus.